A 580-amino-acid chain; its full sequence is UPF0329 protein ECU06_0080 (580 aa).

Residues 308 to 330 (RQKRREREMEKSMKELLRDEEKA) are compositionally biased toward basic and acidic residues. Residues 308-384 (RQKRREREME…KTGKKSKGGR (77 aa)) are disordered. Residues 331–340 (KSKKGRKKKS) show a composition bias toward basic residues. The segment covering 351-363 (SETEEVEASEEME) has biased composition (acidic residues). Over residues 372–384 (ARRKTGKKSKGGR) the composition is skewed to basic residues.

It belongs to the UPF0329 family.

The chain is UPF0329 protein ECU06_0080 from Encephalitozoon cuniculi (strain GB-M1) (Microsporidian parasite).